Consider the following 486-residue polypeptide: Ribosome biogenesis protein YTM1 (486 aa).

Residues 12-99 are ubiquitin-like (UBL) domain; that stretch reads RQLPINLFTR…ESQIDVEYVR (88 aa). WD repeat units follow at residues 212–251, 305–345, 349–388, 392–432, and 454–486; these read GHTGPISSVIASSSGKEIVTGSWDGNINLYVLPDAEPTEH, GHTG…AGAL, PFDKSALCVDQWKMNGTLATGNMDRTICLWDTRQATSLIS, PTTS…TALF, and VLGERLLAVDWNGEVLVAGGEDGEVGIWRARGE. A disordered region spans residues 249–299; sequence TEHQVPADPVSYLPGQGTKKRRKLEKDQEKAPIEGLTDGDATGEGGWRRAP.

The protein belongs to the WD repeat WDR12/YTM1 family. Component of the NOP7 complex, composed of ERB1, NOP7 and YTM1. The complex is held together by ERB1, which interacts with NOP7 via its N-terminal domain and with YTM1 via a high-affinity interaction between the seven-bladed beta-propeller domains of the 2 proteins. The NOP7 complex associates with the 66S pre-ribosome. Interacts (via UBL domain) with MDN1 (via VWFA/MIDAS domain).

It is found in the nucleus. It localises to the nucleolus. The protein localises to the nucleoplasm. Component of the NOP7 complex, which is required for maturation of the 25S and 5.8S ribosomal RNAs and formation of the 60S ribosome. This is Ribosome biogenesis protein YTM1 from Cryptococcus neoformans var. neoformans serotype D (strain B-3501A) (Filobasidiella neoformans).